The sequence spans 427 residues: Glutamate-1-semialdehyde 2,1-aminomutase (427 aa).

Residue Lys265 is modified to N6-(pyridoxal phosphate)lysine.

Belongs to the class-III pyridoxal-phosphate-dependent aminotransferase family. HemL subfamily. In terms of assembly, homodimer. The cofactor is pyridoxal 5'-phosphate.

The protein resides in the cytoplasm. The enzyme catalyses (S)-4-amino-5-oxopentanoate = 5-aminolevulinate. The protein operates within porphyrin-containing compound metabolism; protoporphyrin-IX biosynthesis; 5-aminolevulinate from L-glutamyl-tRNA(Glu): step 2/2. In Burkholderia mallei (strain NCTC 10229), this protein is Glutamate-1-semialdehyde 2,1-aminomutase.